The chain runs to 179 residues: Hypoxanthine phosphoribosyltransferase (179 aa).

Diphosphate-binding residues include arginine 45 and glycine 46. Residue glutamate 101 participates in GMP binding. Glutamate 101 contacts IMP. Mg(2+)-binding residues include glutamate 101 and aspartate 102. The Proton acceptor role is filled by aspartate 105. GMP is bound by residues 105–110, lysine 133, and aspartate 161; that span reads DTGYTL. IMP is bound by residues 105–110 and lysine 133; that span reads DTGYTL. Arginine 167 provides a ligand contact to diphosphate.

It belongs to the purine/pyrimidine phosphoribosyltransferase family. As to quaternary structure, homotetramer. Mg(2+) is required as a cofactor.

The protein localises to the cytoplasm. The enzyme catalyses IMP + diphosphate = hypoxanthine + 5-phospho-alpha-D-ribose 1-diphosphate. It carries out the reaction GMP + diphosphate = guanine + 5-phospho-alpha-D-ribose 1-diphosphate. Its pathway is purine metabolism; IMP biosynthesis via salvage pathway; IMP from hypoxanthine: step 1/1. Purine salvage pathway enzyme which catalyzes the transfer of the ribosyl-5-phosphate group from 5-phospho-alpha-D-ribose 1-diphosphate (PRPP) to the N9 position of hypoxanthine to yield IMP (inosine 5'-monophosphate). To a lesser extent, can also act on guanine leading to GMP, but shows a highly less efficient activity with xanthine. The chain is Hypoxanthine phosphoribosyltransferase (hpt) from Haemophilus influenzae (strain ATCC 51907 / DSM 11121 / KW20 / Rd).